The chain runs to 300 residues: NAD kinase (300 aa).

Residue Asp-75 is the Proton acceptor of the active site. NAD(+)-binding positions include 75-76 (DG), 149-150 (ND), Arg-177, Asp-179, 190-195 (TAYALS), Ala-214, and Gln-248.

Belongs to the NAD kinase family. Requires a divalent metal cation as cofactor.

The protein localises to the cytoplasm. The enzyme catalyses NAD(+) + ATP = ADP + NADP(+) + H(+). In terms of biological role, involved in the regulation of the intracellular balance of NAD and NADP, and is a key enzyme in the biosynthesis of NADP. Catalyzes specifically the phosphorylation on 2'-hydroxyl of the adenosine moiety of NAD to yield NADP. The chain is NAD kinase from Burkholderia ambifaria (strain MC40-6).